We begin with the raw amino-acid sequence, 199 residues long: Large ribosomal subunit protein bL9 (199 aa).

The disordered stretch occupies residues 153 to 199 (KPVKASEKKGRRPRRDEEASDEQILAEENSVTEEAVSEEIQNSESEN).

The protein belongs to the bacterial ribosomal protein bL9 family.

In terms of biological role, binds to the 23S rRNA. The sequence is that of Large ribosomal subunit protein bL9 from Treponema denticola (strain ATCC 35405 / DSM 14222 / CIP 103919 / JCM 8153 / KCTC 15104).